The primary structure comprises 156 residues: Transcription factor MafF (156 aa).

Positions 51–76 (RLKQRRRTLKNRGYAASCRVKRVCQK) are basic motif. A bZIP domain is found at 51-114 (RLKQRRRTLK…DALRGKCEAL (64 aa)). The tract at residues 79 to 93 (LQKQKSELEREVDKL) is leucine-zipper.

The protein belongs to the bZIP family. Maf subfamily. In terms of assembly, monomer and homo- or heterodimer. Interacts with MIP. Forms high affinity heterodimers with members of the CNC-bZIP family such as NFE2L1/NRF1. In terms of tissue distribution, highly expressed in the lung, lower expression in the brain, thymus, liver, spleen, intestine, kidney, heart, muscle, and ovary. Not significantly expressed in hematopoietic cells.

The protein localises to the nucleus. Functionally, since they lack a putative transactivation domain, the small Mafs behave as transcriptional repressors when they dimerize among themselves. However, they seem to serve as transcriptional activators by dimerizing with other (usually larger) basic-zipper proteins, such as NFE2L1/NRF1, and recruiting them to specific DNA-binding sites. Interacts with the upstream promoter region of the oxytocin receptor gene. May be a transcriptional enhancer in the up-regulation of the oxytocin receptor gene at parturition. In Mus musculus (Mouse), this protein is Transcription factor MafF (Maff).